Consider the following 1190-residue polypeptide: PAN2-PAN3 deadenylation complex catalytic subunit PAN2 (1190 aa).

WD repeat units lie at residues 24-63 (TTIV…NSLY), 129-166 (NKFN…PNVL), 167-207 (SSFD…TMKT), 222-264 (GNYI…AIAP), 266-306 (PFPA…NVYL), and 322-361 (NNKP…KDFV). The interval 364 to 511 (PQPVEQPDII…FQYKFQGKLN (148 aa)) is linker. One can recognise a USP domain in the interval 512–924 (KVPNCYSRLQ…KPIVIMYQQT (413 aa)). The region spanning 988 to 1158 (VAIDAEFVML…EDANTALLLY (171 aa)) is the Exonuclease domain. Positions 991, 993, 1097, and 1150 each coordinate a divalent metal cation.

This sequence belongs to the peptidase C19 family. PAN2 subfamily. As to quaternary structure, forms a heterotrimer with an asymmetric homodimer of the regulatory subunit PAN3 to form the poly(A)-nuclease (PAN) deadenylation complex. A divalent metal cation serves as cofactor.

It localises to the cytoplasm. The enzyme catalyses Exonucleolytic cleavage of poly(A) to 5'-AMP.. With respect to regulation, positively regulated by the regulatory subunit PAN3. Catalytic subunit of the poly(A)-nuclease (PAN) deadenylation complex, one of two cytoplasmic mRNA deadenylases involved in mRNA turnover. PAN specifically shortens poly(A) tails of RNA and the activity is stimulated by poly(A)-binding protein PAB1. PAN deadenylation is followed by rapid degradation of the shortened mRNA tails by the CCR4-NOT complex. Deadenylated mRNAs are then degraded by two alternative mechanisms, namely exosome-mediated 3'-5' exonucleolytic degradation, or deadenylation-dependent mRNA decaping and subsequent 5'-3' exonucleolytic degradation by XRN1. May also be involved in post-transcriptional maturation of mRNA poly(A) tails. The protein is PAN2-PAN3 deadenylation complex catalytic subunit PAN2 of Candida albicans (strain SC5314 / ATCC MYA-2876) (Yeast).